The chain runs to 78 residues: MRNLINFAVLIMTIFIVSASGARETRMMEQTCPVFWPMVPCDANKCEQMCRDYYGSVPSYCNRIGTPIAECACSLTPC.

Positions 1 to 22 (MRNLINFAVLIMTIFIVSASGA) are cleaved as a signal peptide. 4 cysteine pairs are disulfide-bonded: Cys-32–Cys-78, Cys-41–Cys-61, Cys-46–Cys-71, and Cys-50–Cys-73.

This sequence belongs to the DEFL family.

It is found in the secreted. In Arabidopsis thaliana (Mouse-ear cress), this protein is Defensin-like protein 201.